Reading from the N-terminus, the 214-residue chain is MQLFHLCLIISCTCPTVQASKLCLGWLWGMDIDPYKEFGATVELLSFLPSDFFPSVRDLLDTASALYREALESPEHCSPHHTALRQAILCWGELMTLATWVGNNLEDPASRDLVVNYVNTNVGLKIRQLLWFHISCLTFGRETVLEYLVSFGVWIRTPPAYRPPNAPILSTLPETTVVRRRDRGRSPRRRTPSPRRRRSPSPRRRRSQSRESQC.

The first 19 residues, 1–19 (MQLFHLCLIISCTCPTVQA), serve as a signal peptide directing secretion. The interval 25 to 27 (GWL) is HBEAG. The segment at 165–214 (NAPILSTLPETTVVRRRDRGRSPRRRTPSPRRRRSPSPRRRRSQSRESQC) is disordered. The segment covering 178–207 (VRRRDRGRSPRRRTPSPRRRRSPSPRRRRS) has biased composition (basic residues). The stretch at 186–192 (SPRRRTP) is one 1; half-length repeat. Residues 186-208 (SPRRRTPSPRRRRSPSPRRRRSQ) form a 3 X 8 AA repeats of S-P-R-R-R-R-S-[PQ] region. Residues 186–214 (SPRRRTPSPRRRRSPSPRRRRSQSRESQC) constitute a propeptide that is removed on maturation. 2 consecutive repeat copies span residues 193–200 (SPRRRRSP) and 201–208 (SPRRRRSQ).

It belongs to the orthohepadnavirus precore antigen family. Homodimerizes. In terms of processing, phosphorylated. Post-translationally, cleaved by host furin.

The protein resides in the secreted. Its subcellular location is the host nucleus. Functionally, may regulate immune response to the intracellular capsid in acting as a T-cell tolerogen, by having an immunoregulatory effect which prevents destruction of infected cells by cytotoxic T-cells. This immune regulation may predispose to chronicity during perinatal infections and prevent severe liver injury during adult infections. This is External core antigen from Hepatitis B virus genotype A2 subtype adw2 (strain Rutter 1979) (HBV-A).